The chain runs to 164 residues: UPF0478 protein SSP1024 (164 aa).

A helical transmembrane segment spans residues I7–L27. The tract at residues R136 to K164 is disordered. Over residues N143–K164 the composition is skewed to polar residues.

This sequence belongs to the UPF0478 family.

It is found in the cell membrane. The polypeptide is UPF0478 protein SSP1024 (Staphylococcus saprophyticus subsp. saprophyticus (strain ATCC 15305 / DSM 20229 / NCIMB 8711 / NCTC 7292 / S-41)).